The primary structure comprises 964 residues: E3 ubiquitin-protein ligase TRIM37 (964 aa).

Position 1 is an N-acetylmethionine (Met-1). The segment at 15–55 (CFICMEKLRDARLCPHCSKLCCFSCIRRWLTEQRAQCPHCR) adopts an RING-type; degenerate zinc-finger fold. A B box-type zinc finger spans residues 90–132 (NEKDKCENHHEKLSVFCWTCKKCICHQCALWGGMHGGHTFKPL). The Zn(2+) site is built by Cys-95, His-98, Cys-117, and His-124. A coiled-coil region spans residues 132 to 234 (LAEIYEQHVT…VEHQLRSCSK (103 aa)). In terms of domain architecture, MATH spans 276-403 (YDSATFVLEN…NDTVILRFQV (128 aa)). A coiled-coil region spans residues 419 to 450 (ITQLEAAQTSYIQQINNLKERLTIELSRTQKS). Ser-454 carries the phosphoserine modification. Disordered stretches follow at residues 477–513 (CSDMLLEGGPTTASVREAKEDEEDEEKIQNEDYHHEL), 530–554 (QLDGSSSSASSTATSNTEENDIDEE), and 640–663 (RPPASLLQPTASYSRKDKDQRKQQ). Residues 503 to 513 (KIQNEDYHHEL) show a composition bias toward basic and acidic residues. Low complexity predominate over residues 534 to 544 (SSSSASSTATS). The stretch at 673–700 (KMLKRLKTQMAEVRCMKTDVKNTLSEIK) forms a coiled coil. Positions 752–761 (NSTNKKSNSP) are enriched in polar residues. Disordered regions lie at residues 752–812 (NSTN…SPRA) and 891–964 (GASA…NSGR). Residues 776-788 (RAVDPGENSRSKG) are compositionally biased toward basic and acidic residues. Positions 794-807 (SEGSPGSSQSGSRH) are enriched in low complexity. Residues 904-916 (SDIECDTENEEQE) show a composition bias toward acidic residues. Polar residues predominate over residues 955–964 (SFNTDENSGR).

Belongs to the TRIM/RBCC family. As to quaternary structure, associates with the PRC2/EED-EZH2 complex. Post-translationally, auto-ubiquitinated. In terms of tissue distribution, ubiquitous. Highly expressed in testis, while it is weakly expressed in other tissues.

The protein resides in the chromosome. It is found in the cytoplasm. The protein localises to the perinuclear region. It localises to the peroxisome membrane. It carries out the reaction S-ubiquitinyl-[E2 ubiquitin-conjugating enzyme]-L-cysteine + [acceptor protein]-L-lysine = [E2 ubiquitin-conjugating enzyme]-L-cysteine + N(6)-ubiquitinyl-[acceptor protein]-L-lysine.. The protein operates within protein modification; protein ubiquitination. Its function is as follows. E3 ubiquitin-protein ligase required to prevent centriole reduplication. Probably acts by ubiquitinating positive regulators of centriole reduplication. Mediates monoubiquitination of 'Lys-119' of histone H2A (H2AK119Ub), a specific tag for epigenetic transcriptional repression: associates with some Polycomb group (PcG) multiprotein PRC2-like complex and mediates repression of target genes. Also acts as a positive regulator of peroxisome import by mediating monoubiquitination of PEX5 at 'Lys-472': monoubiquitination promotes PEX5 stabilitation by preventing its polyubiquitination and degradation by the proteasome. Has anti-HIV activity. The polypeptide is E3 ubiquitin-protein ligase TRIM37 (Homo sapiens (Human)).